The following is a 147-amino-acid chain: Peptide deformylase (147 aa).

Fe cation is bound by residues Cys-88 and His-130. The active site involves Glu-131. Residue His-134 participates in Fe cation binding.

It belongs to the polypeptide deformylase family. Fe(2+) serves as cofactor.

It carries out the reaction N-terminal N-formyl-L-methionyl-[peptide] + H2O = N-terminal L-methionyl-[peptide] + formate. Its function is as follows. Removes the formyl group from the N-terminal Met of newly synthesized proteins. Requires at least a dipeptide for an efficient rate of reaction. N-terminal L-methionine is a prerequisite for activity but the enzyme has broad specificity at other positions. The chain is Peptide deformylase from Clostridium botulinum (strain Alaska E43 / Type E3).